Here is a 616-residue protein sequence, read N- to C-terminus: Dihydroxy-acid dehydratase (616 aa).

Asp-81 contributes to the Mg(2+) binding site. Cys-122 lines the [2Fe-2S] cluster pocket. Asp-123 and Lys-124 together coordinate Mg(2+). Lys-124 is subject to N6-carboxylysine. Cys-195 provides a ligand contact to [2Fe-2S] cluster. Glu-491 is a binding site for Mg(2+). The Proton acceptor role is filled by Ser-517.

This sequence belongs to the IlvD/Edd family. As to quaternary structure, homodimer. It depends on [2Fe-2S] cluster as a cofactor. Mg(2+) is required as a cofactor.

The enzyme catalyses (2R)-2,3-dihydroxy-3-methylbutanoate = 3-methyl-2-oxobutanoate + H2O. It carries out the reaction (2R,3R)-2,3-dihydroxy-3-methylpentanoate = (S)-3-methyl-2-oxopentanoate + H2O. It functions in the pathway amino-acid biosynthesis; L-isoleucine biosynthesis; L-isoleucine from 2-oxobutanoate: step 3/4. It participates in amino-acid biosynthesis; L-valine biosynthesis; L-valine from pyruvate: step 3/4. Its function is as follows. Functions in the biosynthesis of branched-chain amino acids. Catalyzes the dehydration of (2R,3R)-2,3-dihydroxy-3-methylpentanoate (2,3-dihydroxy-3-methylvalerate) into 2-oxo-3-methylpentanoate (2-oxo-3-methylvalerate) and of (2R)-2,3-dihydroxy-3-methylbutanoate (2,3-dihydroxyisovalerate) into 2-oxo-3-methylbutanoate (2-oxoisovalerate), the penultimate precursor to L-isoleucine and L-valine, respectively. This Escherichia coli O127:H6 (strain E2348/69 / EPEC) protein is Dihydroxy-acid dehydratase.